Reading from the N-terminus, the 115-residue chain is Pycsar effector protein TpPycTM (115 aa).

2 helical membrane-spanning segments follow: residues 44–64 and 74–94; these read IGNL…YATN and VWNI…VILV.

The protein resides in the cell inner membrane. Pycsar (pyrimidine cyclase system for antiphage resistance) provides immunity against bacteriophage. The pyrimidine cyclase (PycC) synthesizes cyclic nucleotides in response to infection; these serve as specific second messenger signals. The signals activate the adjacent effector, leading to bacterial cell death and abortive phage infection. A clade C Pycsar system. Its function is as follows. The effector gene of a two-gene Pycsar system. Expression of this and adjacent uridylate cyclase TpPycC (AC A0A1T4LJ54) probably confers resistance to bacteriophage. The genes are probably only expressed in response to bacteriophage infection. Probably only responds to cUMP (produced by its cognate NTP cyclase), acts by impairing membrane integrity. In Treponema porcinum, this protein is Pycsar effector protein TpPycTM.